The primary structure comprises 1105 residues: uncharacterized protein (1105 aa).

Belongs to the mycobacterial PPE family.

This is an uncharacterized protein from Mycobacterium tuberculosis (strain CDC 1551 / Oshkosh).